The chain runs to 261 residues: tRNA pseudouridine synthase A 2 (261 aa).

The active-site Nucleophile is D59. Substrate is bound at residue Y117.

The protein belongs to the tRNA pseudouridine synthase TruA family. Homodimer.

The enzyme catalyses uridine(38/39/40) in tRNA = pseudouridine(38/39/40) in tRNA. Its function is as follows. Formation of pseudouridine at positions 38, 39 and 40 in the anticodon stem and loop of transfer RNAs. The sequence is that of tRNA pseudouridine synthase A 2 from Desulfotalea psychrophila (strain LSv54 / DSM 12343).